We begin with the raw amino-acid sequence, 228 residues long: uncharacterized protein (228 aa).

Positions 1–23 (MIRHTRLLLASLCLIATGARASA) are cleaved as a signal peptide.

This is an uncharacterized protein from Methylorubrum extorquens (strain ATCC 14718 / DSM 1338 / JCM 2805 / NCIMB 9133 / AM1) (Methylobacterium extorquens).